A 401-amino-acid chain; its full sequence is Probable 2,3-bisphosphoglycerate-independent phosphoglycerate mutase (401 aa).

Belongs to the BPG-independent phosphoglycerate mutase family. A-PGAM subfamily.

It catalyses the reaction (2R)-2-phosphoglycerate = (2R)-3-phosphoglycerate. Its pathway is carbohydrate degradation; glycolysis; pyruvate from D-glyceraldehyde 3-phosphate: step 3/5. Catalyzes the interconversion of 2-phosphoglycerate and 3-phosphoglycerate. This Thermotoga neapolitana (strain ATCC 49049 / DSM 4359 / NBRC 107923 / NS-E) protein is Probable 2,3-bisphosphoglycerate-independent phosphoglycerate mutase.